A 287-amino-acid polypeptide reads, in one-letter code: S-methyl-5'-thioadenosine phosphorylase (287 aa).

Residues Thr13 and 55-56 (RH) contribute to the phosphate site. Position 186 (Met186) interacts with substrate. Thr187 lines the phosphate pocket. 210 to 212 (DYD) is a substrate binding site.

The protein belongs to the PNP/MTAP phosphorylase family. MTAP subfamily. In terms of assembly, homohexamer. Dimer of a homotrimer.

The catalysed reaction is S-methyl-5'-thioadenosine + phosphate = 5-(methylsulfanyl)-alpha-D-ribose 1-phosphate + adenine. It participates in amino-acid biosynthesis; L-methionine biosynthesis via salvage pathway; S-methyl-5-thio-alpha-D-ribose 1-phosphate from S-methyl-5'-thioadenosine (phosphorylase route): step 1/1. Its function is as follows. Catalyzes the reversible phosphorylation of S-methyl-5'-thioadenosine (MTA) to adenine and 5-methylthioribose-1-phosphate. Involved in the breakdown of MTA, a major by-product of polyamine biosynthesis. Responsible for the first step in the methionine salvage pathway after MTA has been generated from S-adenosylmethionine. Has broad substrate specificity with 6-aminopurine nucleosides as preferred substrates. The polypeptide is S-methyl-5'-thioadenosine phosphorylase (Leptospira interrogans serogroup Icterohaemorrhagiae serovar copenhageni (strain Fiocruz L1-130)).